Here is a 192-residue protein sequence, read N- to C-terminus: Transposon Tn552 DNA-invertase BinR (192 aa).

A Resolvase/invertase-type recombinase catalytic domain is found at 1 to 136; the sequence is MKIGYARVST…AGRIAARARG (136 aa). Serine 9 (O-(5'-phospho-DNA)-serine intermediate) is an active-site residue. A DNA-binding region (H-T-H motif) is located at residues 163-182; the sequence is IKTIAEQWKVSRTTIYRYLN.

Belongs to the site-specific recombinase resolvase family.

Its function is as follows. DNA-invertase, mediating the inversion of inv. The chain is Transposon Tn552 DNA-invertase BinR (resR) from Staphylococcus aureus.